Consider the following 631-residue polypeptide: MPTTFHEIPRERPLTPLLDSANTPDELRRLAEADLETLADELRQYLLYSVGQSGGHFGAGLGVIELTIALHYVFDTPDDRLVWDVGHQAYPHKILTGRRERMGSLRQKDGLAAFPRRSESEYDTFGVGHSSTSISAALGMAIAARLKGEKRKSVAVIGDGALTAGMAFEALNHATDVGANMLVILNDNDMSISKNVGGLSNYLAKIISSRTYASMREGSKKILSRLPGAWEIARKVEEHAKGMLVPGTLFEELGWNYVGPIDGHDLPTLLATLRNMRDLDGPQFLHVVTKKGKGFAPAEADPIGYHAITKLEPVTPSAVPRKPSGPKYSNVFGQWLCDMAAADQRLVGITPAMKEGSDLVAFAERFPERYFDVAIAEQHAVTLAAGMACDGVKPVVAIYSTFLQRAYDQLIHDVAVQNLDVLFAIDRAGLVGEDGPTHAGSFDISYLRCIPGMLVMTPSDENELRRMLTTGYLFDGPAAVRYPRGSGPNAPLDAGLELLEIGKAIVRRQGKGAALLVFGVQLAEALQVGEALNATVVDMRFVKPLDEALLRELAGSHELLVTIEENAVMGGAGSAVSEFLAAQNIIKPLLHLGLPDYYVEHAKPAQMLAECGLDQAGIERAVRERLDQLRA.

The disordered stretch occupies residues 1-21 (MPTTFHEIPRERPLTPLLDSA). Residues His-87 and 128–130 (GHS) contribute to the thiamine diphosphate site. A Mg(2+)-binding site is contributed by Asp-159. Residues 160–161 (GA), Asn-188, Phe-295, and Glu-377 contribute to the thiamine diphosphate site. Asn-188 is a Mg(2+) binding site.

This sequence belongs to the transketolase family. DXPS subfamily. In terms of assembly, homodimer. Mg(2+) serves as cofactor. It depends on thiamine diphosphate as a cofactor.

The enzyme catalyses D-glyceraldehyde 3-phosphate + pyruvate + H(+) = 1-deoxy-D-xylulose 5-phosphate + CO2. The protein operates within metabolic intermediate biosynthesis; 1-deoxy-D-xylulose 5-phosphate biosynthesis; 1-deoxy-D-xylulose 5-phosphate from D-glyceraldehyde 3-phosphate and pyruvate: step 1/1. Functionally, catalyzes the acyloin condensation reaction between C atoms 2 and 3 of pyruvate and glyceraldehyde 3-phosphate to yield 1-deoxy-D-xylulose-5-phosphate (DXP). The chain is 1-deoxy-D-xylulose-5-phosphate synthase from Ectopseudomonas mendocina (strain ymp) (Pseudomonas mendocina).